The following is a 101-amino-acid chain: Small ribosomal subunit protein uS14 (101 aa).

Basic and acidic residues predominate over residues 1–10; sequence MAKNSMVERD. The disordered stretch occupies residues 1 to 20; it reads MAKNSMVERDRKRRKLAQKY.

The protein belongs to the universal ribosomal protein uS14 family. As to quaternary structure, part of the 30S ribosomal subunit. Contacts proteins S3 and S10.

Its function is as follows. Binds 16S rRNA, required for the assembly of 30S particles and may also be responsible for determining the conformation of the 16S rRNA at the A site. The sequence is that of Small ribosomal subunit protein uS14 from Halorhodospira halophila (strain DSM 244 / SL1) (Ectothiorhodospira halophila (strain DSM 244 / SL1)).